The chain runs to 151 residues: Small ribosomal subunit protein uS15 (151 aa).

The segment at M1–T20 is disordered.

It belongs to the universal ribosomal protein uS15 family. Part of the 30S ribosomal subunit.

The sequence is that of Small ribosomal subunit protein uS15 from Methanococcus maripaludis (strain DSM 14266 / JCM 13030 / NBRC 101832 / S2 / LL).